The sequence spans 580 residues: Phosphomethylpyrimidine synthase (580 aa).

The disordered stretch occupies residues 1-58; it reads MTPTQNEIHPKHSYSPIRKHGLEVPETEIALDDSPSGPNEPFRIYRTRGPETDPTLGL. Residues N180, M209, Y238, H274, 294-296, 335-338, and E374 contribute to the substrate site; these read SRG and DGLR. H378 is a Zn(2+) binding site. Y401 contributes to the substrate binding site. H442 provides a ligand contact to Zn(2+). Residues C522, C525, and C530 each contribute to the [4Fe-4S] cluster site. Positions 554 to 580 are disordered; the sequence is VGASDSTEGMKEKSREFVAGGGEVYRE.

This sequence belongs to the ThiC family. [4Fe-4S] cluster serves as cofactor.

The catalysed reaction is 5-amino-1-(5-phospho-beta-D-ribosyl)imidazole + S-adenosyl-L-methionine = 4-amino-2-methyl-5-(phosphooxymethyl)pyrimidine + CO + 5'-deoxyadenosine + formate + L-methionine + 3 H(+). Its pathway is cofactor biosynthesis; thiamine diphosphate biosynthesis. In terms of biological role, catalyzes the synthesis of the hydroxymethylpyrimidine phosphate (HMP-P) moiety of thiamine from aminoimidazole ribotide (AIR) in a radical S-adenosyl-L-methionine (SAM)-dependent reaction. In Corynebacterium efficiens (strain DSM 44549 / YS-314 / AJ 12310 / JCM 11189 / NBRC 100395), this protein is Phosphomethylpyrimidine synthase.